Here is a 475-residue protein sequence, read N- to C-terminus: MNTALAQQIANEGGVEAWMIAQQHKSLLRFLTCGSVDDGKSTLIGRLLHDTRQIYEDQLSSLHNDSKRHGTQGEKLDLALLVDGLQAEREQGITIDVAYRYFSTEKRKFIIADTPGHEQYTRNMATGASTCELAILLIDARKGVLDQTRRHSFISTLLGIKHLVVAINKMDLMDYSEETFTRIREDYLTFAGQLPGNLDIRFVPLSALEGDNVASQSESMPWYSGPTLLEVLETVEIQRVVDAQPMRFPVQYVNRPNLDFRGYAGTLASGRVEVGQRVKVLPSGVESNVARIVTFDGDREEAFAGEAITLVLTDEIDISRGDLLLAADEALPAVQSASVDVVWMAEQPLSPGQSYDIKIAGKKTRARVDGIRYQVDINNLTQREVENLPLNGIGLVDLTFDEPLVLDRYQQNPVTGGLIFIDRLSNVTVGAGMVHEPVSQATAAPSEFSAFELELNALVRRHFPHWGARDLLGDK.

Positions 25-239 (KSLLRFLTCG…EVLETVEIQR (215 aa)) constitute a tr-type G domain. The tract at residues 34-41 (GSVDDGKS) is G1. 34-41 (GSVDDGKS) lines the GTP pocket. The segment at 92-96 (GITID) is G2. Residues 113 to 116 (DTPG) form a G3 region. GTP is bound by residues 113 to 117 (DTPGH) and 168 to 171 (NKMD). The G4 stretch occupies residues 168 to 171 (NKMD). The interval 206-208 (SAL) is G5.

Belongs to the TRAFAC class translation factor GTPase superfamily. Classic translation factor GTPase family. CysN/NodQ subfamily. As to quaternary structure, heterodimer composed of CysD, the smaller subunit, and CysN.

It carries out the reaction sulfate + ATP + H(+) = adenosine 5'-phosphosulfate + diphosphate. It participates in sulfur metabolism; hydrogen sulfide biosynthesis; sulfite from sulfate: step 1/3. Functionally, with CysD forms the ATP sulfurylase (ATPS) that catalyzes the adenylation of sulfate producing adenosine 5'-phosphosulfate (APS) and diphosphate, the first enzymatic step in sulfur assimilation pathway. APS synthesis involves the formation of a high-energy phosphoric-sulfuric acid anhydride bond driven by GTP hydrolysis by CysN coupled to ATP hydrolysis by CysD. The protein is Sulfate adenylyltransferase subunit 1 of Shigella dysenteriae serotype 1 (strain Sd197).